The sequence spans 418 residues: L-rhamnose isomerase (418 aa).

Positions 262, 294, and 296 each coordinate Mn(2+).

The protein belongs to the rhamnose isomerase family. In terms of assembly, homotetramer. The cofactor is Mn(2+).

Its subcellular location is the cytoplasm. The catalysed reaction is L-rhamnopyranose = L-rhamnulose. The protein operates within carbohydrate degradation; L-rhamnose degradation; glycerone phosphate from L-rhamnose: step 1/3. In terms of biological role, catalyzes the interconversion of L-rhamnose and L-rhamnulose. In Yersinia pseudotuberculosis serotype O:1b (strain IP 31758), this protein is L-rhamnose isomerase.